A 967-amino-acid chain; its full sequence is Sulfite dehydrogenase subunit A (967 aa).

Residues 15 to 71 form the 4Fe-4S Mo/W bis-MGD-type domain; sequence VEVKETTCYMCACRCGIRVHLRDGEVRYIDGNPNHPLNKGVICAKGSSGIMKQYSPG. Residues Cys22, Cys25, Cys29, and Cys57 each coordinate [4Fe-4S] cluster.

Belongs to the prokaryotic molybdopterin-containing oxidoreductase family. Forms a heterotrimeric membrane-bound complex composed of a catalytic heterodimer (SoeAB) and a membrane anchor protein (SoeC). The cofactor is [4Fe-4S] cluster. Mo-bis(molybdopterin guanine dinucleotide) is required as a cofactor.

It is found in the cell inner membrane. It carries out the reaction a quinone + sulfite + H2O = a quinol + sulfate. The catalysed reaction is a menaquinone + sulfite + H2O = a menaquinol + sulfate. Functionally, part of the SoeABC complex that catalyzes the oxidation of sulfite to sulfate. In Allochromatium vinosum (strain ATCC 17899 / DSM 180 / NBRC 103801 / NCIMB 10441 / D) (Chromatium vinosum), this protein is Sulfite dehydrogenase subunit A.